A 122-amino-acid polypeptide reads, in one-letter code: MIQPQTYLNVADNSGARKLMCIRILGASNRKYGNIGDIIIAVTKEAVPNMPLKKSEVVRAVIVRTCKEVRRDNGMTIRFDDNVAATTNQEGNPKGTRVFGPVARESRGYNFTKIIPLAPEVL.

This sequence belongs to the universal ribosomal protein uL14 family. As to quaternary structure, part of the 50S ribosomal subunit.

It is found in the plastid. It localises to the chloroplast. Functionally, binds to 23S rRNA. The sequence is that of Large ribosomal subunit protein uL14c from Anthoceros angustus (Hornwort).